A 213-amino-acid polypeptide reads, in one-letter code: MRVKHKKWADPLIAAHPELMIDDATQFKGKWQSRFAKEQPLHLEVGMGKGQFIIGMAKDHPEINFIGLEIQRTVAAIALKKALEEDLPNLQLICGDGEDLQEYFEDGEVAKMYLNFSDPWPKKRHAKRRLTYKTFLATYQQILQDQGAIELKTDNMGLFEFSLESMNNYGMIFDGVWLDLHHSEENEHNVETEYEQKFAAKGQPIYKLIANFK.

S-adenosyl-L-methionine is bound by residues Glu-44, Glu-69, Asp-96, and Asp-118. The active site involves Asp-118. Substrate-binding positions include Lys-122, Asp-154, and 192–195 (TEYE).

This sequence belongs to the class I-like SAM-binding methyltransferase superfamily. TrmB family.

It carries out the reaction guanosine(46) in tRNA + S-adenosyl-L-methionine = N(7)-methylguanosine(46) in tRNA + S-adenosyl-L-homocysteine. It participates in tRNA modification; N(7)-methylguanine-tRNA biosynthesis. Catalyzes the formation of N(7)-methylguanine at position 46 (m7G46) in tRNA. The protein is tRNA (guanine-N(7)-)-methyltransferase of Limosilactobacillus reuteri (strain DSM 20016) (Lactobacillus reuteri).